Consider the following 577-residue polypeptide: MRSHFCTEISEKDVGKTIKVAGWCNTYRDHGGVVFIDLRDKSGLVQLVCDPSSKAYEKALEVRSEFVLVAKGRVRLRGAGLENPKLKTGKIEIVLEELVIENKSATPPIEIGNKSVNEDLRLKYRYLDLRSLNAYEIFKLRSEVALITRNTLAQKGFLEIETPILSKTTPEGARDYLVPSRVHEGEFFALPQSPQLFKQLLMVGGMDRYFQIARCFRDEDLRADRQPEFTQIDAEMSFCDENDVMGVVEDLLQEIFKAIGHTISKPFKRMPYKEAMENYGSDKPDLRFELPLIEVGDCFIDSSNAIFSNIAKDPKNQRIKALNVKGADALFSRSVLKELEEFVRQFGAKGLAYLQIKEDGIKGPLVKFLSEKGLKNILEKTGAKIGDIVFFGAGDKKIVLDYMGRLRLKVAETLDLIDKDALNFLWVVNFPMFEKTENGYHAAHHPFTMPKNIECEDIEEVEAHAYDVVLNGVELGGGSIRIHKEEMQKKVFEKINIHEEEAQKKFGFLLEALKFGAPPHGGFAIGFDRLIMLMTKSNSIRDVIAFPKTQKASCLLTNAPSPINEEQLRELHIRLRK.

Glu171 is a binding site for L-aspartate. An aspartate region spans residues 195–198; the sequence is QLFK. L-aspartate is bound at residue Arg217. Residues 217 to 219 and Gln226 each bind ATP; that span reads RDE. Residue His444 coordinates L-aspartate. An ATP-binding site is contributed by Glu474. Arg481 provides a ligand contact to L-aspartate. Residue 526–529 coordinates ATP; that stretch reads GFDR.

Belongs to the class-II aminoacyl-tRNA synthetase family. Type 1 subfamily. In terms of assembly, homodimer.

Its subcellular location is the cytoplasm. The catalysed reaction is tRNA(Asx) + L-aspartate + ATP = L-aspartyl-tRNA(Asx) + AMP + diphosphate. In terms of biological role, aspartyl-tRNA synthetase with relaxed tRNA specificity since it is able to aspartylate not only its cognate tRNA(Asp) but also tRNA(Asn). Reaction proceeds in two steps: L-aspartate is first activated by ATP to form Asp-AMP and then transferred to the acceptor end of tRNA(Asp/Asn). This is Aspartate--tRNA(Asp/Asn) ligase from Helicobacter pylori (strain P12).